The primary structure comprises 205 residues: CASP-like protein 2A1 (205 aa).

Residues 1 to 35 (MMGDKGEKECATASSPIELGCGEGDESGNKSSMRT) are Cytoplasmic-facing. The helical transmembrane segment at 36–56 (VETLLRLVPVALCTVSLVVML) threads the bilayer. The Extracellular segment spans residues 57-77 (KNSQTNDFGSLSYSDLGAFRY). The helical transmembrane segment at 78 to 98 (LVHANGICAGYSLLSAIFTAM) threads the bilayer. At 99-106 (PRPPTMSR) the chain is on the cytoplasmic side. A helical membrane pass occupies residues 107-127 (AWTFFLLDQVLTYLILAAGAV). The Extracellular portion of the chain corresponds to 128-157 (STEVVYLAYKGDEAVTWSDACSSFGGFCQK). The chain crosses the membrane as a helical span at residues 158–178 (TTASISITFVTVLCYAVLSLI). Over 179 to 205 (SSYKLFSKYDAPICFNGKGIEIAAFHS) the chain is Cytoplasmic.

Belongs to the Casparian strip membrane proteins (CASP) family. Homodimer and heterodimers.

It localises to the cell membrane. This is CASP-like protein 2A1 from Vitis vinifera (Grape).